Consider the following 524-residue polypeptide: Bifunctional purine biosynthesis protein PurH (524 aa).

In terms of domain architecture, MGS-like spans 1–145 (MIKQALLSVS…KNHRDVTVIV (145 aa)).

It belongs to the PurH family.

The catalysed reaction is (6R)-10-formyltetrahydrofolate + 5-amino-1-(5-phospho-beta-D-ribosyl)imidazole-4-carboxamide = 5-formamido-1-(5-phospho-D-ribosyl)imidazole-4-carboxamide + (6S)-5,6,7,8-tetrahydrofolate. It catalyses the reaction IMP + H2O = 5-formamido-1-(5-phospho-D-ribosyl)imidazole-4-carboxamide. Its pathway is purine metabolism; IMP biosynthesis via de novo pathway; 5-formamido-1-(5-phospho-D-ribosyl)imidazole-4-carboxamide from 5-amino-1-(5-phospho-D-ribosyl)imidazole-4-carboxamide (10-formyl THF route): step 1/1. It participates in purine metabolism; IMP biosynthesis via de novo pathway; IMP from 5-formamido-1-(5-phospho-D-ribosyl)imidazole-4-carboxamide: step 1/1. This is Bifunctional purine biosynthesis protein PurH from Cupriavidus taiwanensis (strain DSM 17343 / BCRC 17206 / CCUG 44338 / CIP 107171 / LMG 19424 / R1) (Ralstonia taiwanensis (strain LMG 19424)).